A 135-amino-acid chain; its full sequence is uncharacterized protein (135 aa).

4 helical membrane passes run 7–25 (WSAA…EWTI), 29–51 (ILLT…TGNI), 64–85 (VFIF…EVGI), and 89–108 (ALIF…ISIF).

The protein belongs to the bacteriophage holin family. Cp-1 holin subfamily.

It localises to the cell membrane. This is an uncharacterized protein from Halalkalibacterium halodurans (strain ATCC BAA-125 / DSM 18197 / FERM 7344 / JCM 9153 / C-125) (Bacillus halodurans).